The chain runs to 727 residues: Putative E3 ubiquitin-protein ligase UNKL (727 aa).

Residues 1-21 (MPSVSKAAAAALSGSPPQTEK) form a disordered region. C3H1-type zinc fingers lie at residues 75-104 (YSPDIYCSKYDEATGLCPDGDECPYLHRTT), 115-145 (YYKTGTCIHETDARGHCVKNGLHCAFAHGPL), 243-277 (QYRSTPCPSVKHGDEWGEPSRCDGGDSCQYCHSRT), and 285-313 (IYKSTKCNDMRQTGYCPRGPFCAFAHTEK). Polar residues predominate over residues 330–339 (STSAYSSQPG). Disordered stretches follow at residues 330-360 (STSAYSSQPGSAKRKDSPSEGSQKATEDSKQ), 446-514 (LTGP…ATLG), and 543-562 (SPSPILNSGPSASSSASPNS). A compositionally biased stretch (low complexity) spans 463 to 495 (SLPRSPSLHSSSSLSTSPLSSLSQSLSGPLVSS). Residues 686–721 (CVACQERAHGTVLRPCQHRVLCEPCAASTPECPYCK) form an RING-type zinc finger.

It belongs to the unkempt family. As to quaternary structure, interacts with the GTP-bound form of Rac1. Interacts with Baf60b/Smarcd2. Ubiquitination is enhanced by activated Rac1. The presence of the RING finger domain is not essential for ubiquitination to occur. In terms of tissue distribution, ubiquitous.

It is found in the cytoplasm. It localises to the nucleus. It participates in protein modification; protein ubiquitination. Its function is as follows. May participate in a protein complex showing an E3 ligase activity regulated by Rac1. Ubiquitination is directed towards itself and possibly other substrates, such as Baf60b/Smarcd2. Intrinsic E3 ligase activity has not been proven. This Mus musculus (Mouse) protein is Putative E3 ubiquitin-protein ligase UNKL (Unkl).